The sequence spans 118 residues: Class I hydrophobin 1 (118 aa).

A signal peptide spans Met-1–Ala-20. Disulfide bonds link Cys-34–Cys-97, Cys-41–Cys-91, Cys-42–Cys-77, and Cys-98–Cys-111. Asn-54 carries an N-linked (GlcNAc...) asparagine glycan. Asn-115 carries an N-linked (GlcNAc...) asparagine glycan.

The protein belongs to the fungal hydrophobin family. Self-assembles to form functional amyloid fibrils called rodlets. Self-assembly into fibrillar rodlets occurs spontaneously at hydrophobic:hydrophilic interfaces and the rodlets further associate laterally to form amphipathic monolayers.

The protein localises to the secreted. The protein resides in the cell wall. Its function is as follows. Aerial growth, conidiation, and dispersal of filamentous fungi in the environment rely upon a capability of their secreting small amphipathic proteins called hydrophobins (HPBs) with low sequence identity. Class I can self-assemble into an outermost layer of rodlet bundles on aerial cell surfaces, conferring cellular hydrophobicity that supports fungal growth, development and dispersal; whereas Class II form highly ordered films at water-air interfaces through intermolecular interactions but contribute nothing to the rodlet structure. The protein is Class I hydrophobin 1 of Coprinopsis cinerea (strain Okayama-7 / 130 / ATCC MYA-4618 / FGSC 9003) (Inky cap fungus).